A 309-amino-acid polypeptide reads, in one-letter code: Olfactory receptor 8U9 (309 aa).

Over methionine 1 to phenylalanine 28 the chain is Extracellular. Asparagine 5 carries N-linked (GlcNAc...) asparagine glycosylation. A helical transmembrane segment spans residues valine 29 to isoleucine 49. Topologically, residues arginine 50–asparagine 56 are cytoplasmic. The chain crosses the membrane as a helical span at residues threonine 57–isoleucine 77. At threonine 78 to cysteine 97 the chain is on the extracellular side. A disulfide bridge links cysteine 97 with cysteine 179. Residues alanine 98–methionine 118 traverse the membrane as a helical segment. Residues alanine 119–glutamine 143 are Cytoplasmic-facing. A helical membrane pass occupies residues leucine 144–phenylalanine 164. Residues arginine 165–glycine 204 lie on the Extracellular side of the membrane. A helical membrane pass occupies residues isoleucine 205–isoleucine 225. The Cytoplasmic segment spans residues leucine 226–serine 239. The chain crosses the membrane as a helical span at residues threonine 240 to leucine 260. At glutamine 261 to lysine 272 the chain is on the extracellular side. Residues methionine 273 to glutamine 293 form a helical membrane-spanning segment. At asparagine 294–asparagine 309 the chain is on the cytoplasmic side.

It belongs to the G-protein coupled receptor 1 family.

The protein localises to the cell membrane. In terms of biological role, odorant receptor. In Homo sapiens (Human), this protein is Olfactory receptor 8U9 (OR8U9).